We begin with the raw amino-acid sequence, 866 residues long: Probable LRR receptor-like serine/threonine-protein kinase At5g16900 (866 aa).

Residues 1-20 form the signal peptide; sequence MEDRHRYLFFIFAIIHYVQA. Residues 21–515 are Extracellular-facing; that stretch reads QQGFISLDCG…SSSGNKETTV (495 aa). 8 N-linked (GlcNAc...) asparagine glycosylation sites follow: Asn-137, Asn-176, Asn-230, Asn-251, Asn-331, Asn-404, Asn-409, and Asn-436. LRR repeat units follow at residues 415–438, 439–461, and 463–485; these read RIIS…QNLT, QLQK…LANM, and SLLF…LLDR. N-linked (GlcNAc...) asparagine glycosylation is found at Asn-468 and Asn-505. Residues 516–536 traverse the membrane as a helical segment; it reads IAPVAAAIAIFIAVLVLIIVF. Over 537–866 the chain is Cytoplasmic; it reads IKKRPSSIRA…LNQVIDSKSS (330 aa). The residue at position 564 (Thr-564) is a Phosphothreonine. Residues 573–846 form the Protein kinase domain; it reads NNFERVIGEG…HVVQELKQCI (274 aa). ATP is bound by residues 579–587 and Lys-601; that span reads IGEGGFGVV. Tyr-646 carries the phosphotyrosine modification. The active-site Proton acceptor is the Asp-698. The residue at position 732 (Ser-732) is a Phosphoserine. 2 positions are modified to phosphothreonine: Thr-733 and Thr-738. The residue at position 746 (Tyr-746) is a Phosphotyrosine.

Belongs to the protein kinase superfamily. Ser/Thr protein kinase family.

It is found in the membrane. It catalyses the reaction L-seryl-[protein] + ATP = O-phospho-L-seryl-[protein] + ADP + H(+). It carries out the reaction L-threonyl-[protein] + ATP = O-phospho-L-threonyl-[protein] + ADP + H(+). This is Probable LRR receptor-like serine/threonine-protein kinase At5g16900 from Arabidopsis thaliana (Mouse-ear cress).